Consider the following 266-residue polypeptide: DNA damage-regulated autophagy modulator protein 2 (266 aa).

The next 6 membrane-spanning stretches (helical) occupy residues 8 to 28 (LSFL…FSYI), 53 to 73 (KCLF…TIYV), 92 to 112 (NKAG…VANF), 117 to 137 (FFAV…LYMF), 160 to 180 (LLLV…SSLL), and 207 to 227 (ITTA…LTYI).

It belongs to the DRAM/TMEM150 family.

The protein resides in the lysosome membrane. It localises to the photoreceptor inner segment. It is found in the apical cell membrane. In terms of biological role, plays a role in the initiation of autophagy. In the retina, might be involved in the process of photoreceptor cells renewal and recycling to preserve visual function. Induces apoptotic cell death when coexpressed with DRAM1. The polypeptide is DNA damage-regulated autophagy modulator protein 2 (DRAM2) (Bos taurus (Bovine)).